We begin with the raw amino-acid sequence, 100 residues long: Large ribosomal subunit protein uL23 (100 aa).

Belongs to the universal ribosomal protein uL23 family. As to quaternary structure, part of the 50S ribosomal subunit. Contacts protein L29, and trigger factor when it is bound to the ribosome.

One of the early assembly proteins it binds 23S rRNA. One of the proteins that surrounds the polypeptide exit tunnel on the outside of the ribosome. Forms the main docking site for trigger factor binding to the ribosome. This Escherichia coli O157:H7 protein is Large ribosomal subunit protein uL23.